A 417-amino-acid polypeptide reads, in one-letter code: Serine protease hepsin (417 aa).

Over 1–23 (MAQKEGGRTVPCCSRPKVAALTA) the chain is Cytoplasmic. The helical; Signal-anchor for type II membrane protein transmembrane segment at 24–44 (GTLLLLTAIGAASWAIVAVLL) threads the bilayer. Over 45 to 417 (RSDQEPLYPV…SEASGMVTQL (373 aa)) the chain is Extracellular. The SRCR domain occupies 54–151 (VQVSSADARL…RGRFLAAICQ (98 aa)). 8 cysteine pairs are disulfide-bonded: cysteine 77-cysteine 140, cysteine 90-cysteine 150, cysteine 119-cysteine 138, cysteine 153-cysteine 277, cysteine 188-cysteine 204, cysteine 291-cysteine 359, cysteine 322-cysteine 338, and cysteine 349-cysteine 381. N-linked (GlcNAc...) asparagine glycosylation is present at asparagine 112. Positions 163–405 (IVGGRDTSLG…FREWIFQAIK (243 aa)) constitute a Peptidase S1 domain. Residues histidine 203 and aspartate 257 each act as charge relay system in the active site. The active-site Charge relay system is serine 353.

It belongs to the peptidase S1 family. As to expression, detected in liver and kidney.

It is found in the cell membrane. The protein localises to the apical cell membrane. It carries out the reaction Cleavage after basic amino-acid residues, with Arg strongly preferred to Lys.. Serine protease that cleaves extracellular substrates, and contributes to the proteolytic processing of growth factors, such as HGF and MST1/HGFL. Plays a role in cell growth and maintenance of cell morphology. Plays a role in the proteolytic processing of ACE2. Mediates the proteolytic cleavage of urinary UMOD that is required for UMOD polymerization. The sequence is that of Serine protease hepsin (HPN) from Homo sapiens (Human).